Consider the following 858-residue polypeptide: DNA mismatch repair protein MutS (858 aa).

613–620 is a binding site for ATP; the sequence is GPNMAGKS.

It belongs to the DNA mismatch repair MutS family.

Functionally, this protein is involved in the repair of mismatches in DNA. It is possible that it carries out the mismatch recognition step. This protein has a weak ATPase activity. The sequence is that of DNA mismatch repair protein MutS from Dehalococcoides mccartyi (strain ATCC BAA-2100 / JCM 16839 / KCTC 5957 / BAV1).